A 254-amino-acid polypeptide reads, in one-letter code: Probable transcriptional regulatory protein MAE_13580 (254 aa).

The protein belongs to the TACO1 family.

It is found in the cytoplasm. The sequence is that of Probable transcriptional regulatory protein MAE_13580 from Microcystis aeruginosa (strain NIES-843 / IAM M-2473).